Consider the following 133-residue polypeptide: Large ribosomal subunit protein bL17 (133 aa).

The protein belongs to the bacterial ribosomal protein bL17 family. Part of the 50S ribosomal subunit. Contacts protein L32.

In Ehrlichia chaffeensis (strain ATCC CRL-10679 / Arkansas), this protein is Large ribosomal subunit protein bL17.